Here is a 130-residue protein sequence, read N- to C-terminus: Large ribosomal subunit protein uL22 (130 aa).

This sequence belongs to the universal ribosomal protein uL22 family. As to quaternary structure, part of the 50S ribosomal subunit.

Its function is as follows. This protein binds specifically to 23S rRNA; its binding is stimulated by other ribosomal proteins, e.g. L4, L17, and L20. It is important during the early stages of 50S assembly. It makes multiple contacts with different domains of the 23S rRNA in the assembled 50S subunit and ribosome. Functionally, the globular domain of the protein is located near the polypeptide exit tunnel on the outside of the subunit, while an extended beta-hairpin is found that lines the wall of the exit tunnel in the center of the 70S ribosome. The sequence is that of Large ribosomal subunit protein uL22 from Clavibacter michiganensis subsp. michiganensis (strain NCPPB 382).